Consider the following 289-residue polypeptide: Heme oxygenase 1, chloroplastic (289 aa).

A chloroplast-targeting transit peptide spans 1-64 (MAPAAASLTA…SASSSRRMVV (64 aa)). Heme b is bound at residue H96.

This sequence belongs to the heme oxygenase family.

The protein resides in the plastid. It localises to the chloroplast. The catalysed reaction is heme b + 3 reduced [NADPH--hemoprotein reductase] + 3 O2 = biliverdin IXalpha + CO + Fe(2+) + 3 oxidized [NADPH--hemoprotein reductase] + 3 H2O + H(+). Its function is as follows. Catalyzes the opening of the heme ring to form the open-chain tetrapyrrole biliverdin IX with the release of iron and carbon monoxide (CO). Is a key enzyme in the synthesis of the chromophore of the phytochrome family of plant photoreceptors. Essential for photoperiod response and repression of flowering through cytochromes that inhibit flowering by affecting both HD1 and EHD1 flowering pathways. This is Heme oxygenase 1, chloroplastic (HO1) from Oryza sativa subsp. japonica (Rice).